The sequence spans 718 residues: Cyclomaltodextrin glucanotransferase (718 aa).

The signal sequence occupies residues 1 to 34; that stretch reads MFQMAKRVLLSTTLTFSLLAGSALPFLPASAIYA. The segment at 35–172 is A1; the sequence is DADTAVTNKQ…GIKIIIDFAP (138 aa). Ca(2+)-binding residues include aspartate 61, asparagine 63, asparagine 66, and asparagine 67. Cysteine 77 and cysteine 84 form a disulfide bridge. Ca(2+) contacts are provided by glycine 85 and aspartate 87. 134–135 serves as a coordination point for substrate; sequence YW. A Ca(2+)-binding site is contributed by asparagine 173. Residues 173-236 are b; the sequence is NHTSPAMETD…NLYDLADLNH (64 aa). Residue histidine 174 coordinates substrate. Isoleucine 224 lines the Ca(2+) pocket. 227–230 contacts substrate; that stretch reads NLYD. Aspartate 233 is a binding site for Ca(2+). The interval 237–440 is A2; that stretch reads NNSTIDTYFK…LRKSNPAIAY (204 aa). Arginine 261 provides a ligand contact to substrate. Aspartate 263 (nucleophile) is an active-site residue. 266 to 267 contributes to the substrate binding site; the sequence is KH. Histidine 267 provides a ligand contact to Ca(2+). The active-site Proton donor is glutamate 291. Residues histidine 361, aspartate 405, and arginine 409 each coordinate substrate. Residues 441–528 form a c region; that stretch reads GSTQQRWINN…ATAVWQYTAS (88 aa). A d region spans residues 529-614; it reads ETTPTIGHVG…SNAYNDFTIL (86 aa). Residues 532-612 form the IPT/TIG domain; that stretch reads PTIGHVGPVM…VNSNAYNDFT (81 aa). The CBM20 domain maps to 613–718; sequence ILSGDQVSVR…GTATVTINWQ (106 aa). The tract at residues 615 to 718 is e; the sequence is SGDQVSVRFV…GTATVTINWQ (104 aa).

Belongs to the glycosyl hydrolase 13 family. As to quaternary structure, monomer. Ca(2+) is required as a cofactor.

It is found in the secreted. It catalyses the reaction Cyclizes part of a (1-&gt;4)-alpha-D-glucan chain by formation of a (1-&gt;4)-alpha-D-glucosidic bond.. This Bacillus licheniformis protein is Cyclomaltodextrin glucanotransferase (cgtA).